The following is an 86-amino-acid chain: MTRFVLFLSCFFLIGMVVECKDGYLMGPDGCKLDCLMRKGTFCAETCSLRKGKDGYCYAWLACYCYNMPDWVKTWERATNTCGKGK.

The N-terminal stretch at 1-20 (MTRFVLFLSCFFLIGMVVEC) is a signal peptide. The region spanning 21–83 (KDGYLMGPDG…TWERATNTCG (63 aa)) is the LCN-type CS-alpha/beta domain. 4 cysteine pairs are disulfide-bonded: Cys-31/Cys-82, Cys-35/Cys-57, Cys-43/Cys-63, and Cys-47/Cys-65. A Lysine amide modification is found at Lys-84.

The protein belongs to the long (4 C-C) scorpion toxin superfamily. Sodium channel inhibitor family. Beta subfamily. As to expression, expressed by the venom gland.

It localises to the secreted. Its function is as follows. Beta toxins bind voltage-independently at site-4 of sodium channels (Nav) and shift the voltage of activation toward more negative potentials thereby affecting sodium channel activation and promoting spontaneous and repetitive firing. The protein is Toxin TdNa7 of Tityus discrepans (Venezuelan scorpion).